The chain runs to 227 residues: Ribose-5-phosphate isomerase A (227 aa).

Substrate contacts are provided by residues 26 to 29, 82 to 85, and 95 to 98; these read TGST, DGAD, and KGGG. The active-site Proton acceptor is the Glu-104. Position 122 (Lys-122) interacts with substrate.

This sequence belongs to the ribose 5-phosphate isomerase family. Homodimer.

The enzyme catalyses aldehydo-D-ribose 5-phosphate = D-ribulose 5-phosphate. It functions in the pathway carbohydrate degradation; pentose phosphate pathway; D-ribose 5-phosphate from D-ribulose 5-phosphate (non-oxidative stage): step 1/1. Its function is as follows. Catalyzes the reversible conversion of ribose-5-phosphate to ribulose 5-phosphate. This is Ribose-5-phosphate isomerase A from Streptococcus equi subsp. zooepidemicus (strain H70).